A 241-amino-acid polypeptide reads, in one-letter code: MAPK phosphothreonine lyase (241 aa).

H106 functions as the Proton donor in the catalytic mechanism. Catalysis depends on K136, which acts as the Proton acceptor.

Belongs to the phosphothreonine lyase family.

It localises to the secreted. Functionally, secreted effector that irreversibly inactivates host MAP kinases by catalyzing the dephosphorylation of the phosphothreonine residue in the pT-X-pY motif present in MAPKs, via a beta-elimination reaction leading to a dehydrobutyrine residue. The polypeptide is MAPK phosphothreonine lyase (spvC) (Salmonella enteritidis).